The sequence spans 360 residues: Phenylalanine--tRNA ligase alpha subunit (360 aa).

Glu-260 contacts Mg(2+).

It belongs to the class-II aminoacyl-tRNA synthetase family. Phe-tRNA synthetase alpha subunit type 1 subfamily. As to quaternary structure, tetramer of two alpha and two beta subunits. Requires Mg(2+) as cofactor.

The protein localises to the cytoplasm. The enzyme catalyses tRNA(Phe) + L-phenylalanine + ATP = L-phenylalanyl-tRNA(Phe) + AMP + diphosphate + H(+). This Rhizobium etli (strain ATCC 51251 / DSM 11541 / JCM 21823 / NBRC 15573 / CFN 42) protein is Phenylalanine--tRNA ligase alpha subunit.